The sequence spans 467 residues: Phosphoglucosamine mutase (467 aa).

Serine 120 (phosphoserine intermediate) is an active-site residue. Mg(2+) contacts are provided by serine 120, aspartate 261, aspartate 263, and aspartate 265. Serine 120 is subject to Phosphoserine.

The protein belongs to the phosphohexose mutase family. It depends on Mg(2+) as a cofactor. In terms of processing, activated by phosphorylation.

It carries out the reaction alpha-D-glucosamine 1-phosphate = D-glucosamine 6-phosphate. Its function is as follows. Catalyzes the conversion of glucosamine-6-phosphate to glucosamine-1-phosphate. In Parafrankia sp. (strain EAN1pec), this protein is Phosphoglucosamine mutase.